The following is a 196-amino-acid chain: ATP-dependent Clp protease proteolytic subunit (196 aa).

Ser101 functions as the Nucleophile in the catalytic mechanism. His126 is an active-site residue.

Belongs to the peptidase S14 family. Component of the chloroplastic Clp protease core complex.

Its subcellular location is the plastid. It localises to the chloroplast stroma. The enzyme catalyses Hydrolysis of proteins to small peptides in the presence of ATP and magnesium. alpha-casein is the usual test substrate. In the absence of ATP, only oligopeptides shorter than five residues are hydrolyzed (such as succinyl-Leu-Tyr-|-NHMec, and Leu-Tyr-Leu-|-Tyr-Trp, in which cleavage of the -Tyr-|-Leu- and -Tyr-|-Trp bonds also occurs).. In terms of biological role, cleaves peptides in various proteins in a process that requires ATP hydrolysis. Has a chymotrypsin-like activity. Plays a major role in the degradation of misfolded proteins. This Panax ginseng (Korean ginseng) protein is ATP-dependent Clp protease proteolytic subunit.